The primary structure comprises 91 residues: Translation initiation factor IF-1 (91 aa).

Residues methionine 1–lysine 72 enclose the S1-like domain. The disordered stretch occupies residues arginine 70 to arginine 91.

This sequence belongs to the IF-1 family. Component of the 30S ribosomal translation pre-initiation complex which assembles on the 30S ribosome in the order IF-2 and IF-3, IF-1 and N-formylmethionyl-tRNA(fMet); mRNA recruitment can occur at any time during PIC assembly.

It is found in the cytoplasm. Its function is as follows. One of the essential components for the initiation of protein synthesis. Stabilizes the binding of IF-2 and IF-3 on the 30S subunit to which N-formylmethionyl-tRNA(fMet) subsequently binds. Helps modulate mRNA selection, yielding the 30S pre-initiation complex (PIC). Upon addition of the 50S ribosomal subunit IF-1, IF-2 and IF-3 are released leaving the mature 70S translation initiation complex. In Azorhizobium caulinodans (strain ATCC 43989 / DSM 5975 / JCM 20966 / LMG 6465 / NBRC 14845 / NCIMB 13405 / ORS 571), this protein is Translation initiation factor IF-1.